Reading from the N-terminus, the 495-residue chain is Probable cytosol aminopeptidase (495 aa).

Mn(2+) contacts are provided by lysine 258 and aspartate 263. The active site involves lysine 270. Aspartate 281, aspartate 340, and glutamate 342 together coordinate Mn(2+). Residue arginine 344 is part of the active site.

Belongs to the peptidase M17 family. Mn(2+) serves as cofactor.

The protein localises to the cytoplasm. The enzyme catalyses Release of an N-terminal amino acid, Xaa-|-Yaa-, in which Xaa is preferably Leu, but may be other amino acids including Pro although not Arg or Lys, and Yaa may be Pro. Amino acid amides and methyl esters are also readily hydrolyzed, but rates on arylamides are exceedingly low.. The catalysed reaction is Release of an N-terminal amino acid, preferentially leucine, but not glutamic or aspartic acids.. Its function is as follows. Presumably involved in the processing and regular turnover of intracellular proteins. Catalyzes the removal of unsubstituted N-terminal amino acids from various peptides. The sequence is that of Probable cytosol aminopeptidase from Leptospira interrogans serogroup Icterohaemorrhagiae serovar copenhageni (strain Fiocruz L1-130).